Reading from the N-terminus, the 967-residue chain is Haze protective factor 1 (967 aa).

The N-terminal stretch at 1–23 (MFNRFNKLQAALALVLYSQSALG) is a signal peptide. Residues asparagine 28 and asparagine 35 are each glycosylated (N-linked (GlcNAc...) asparagine). Residues 72 to 301 (SSSTEVSSSI…STSSASTASG (230 aa)) are disordered. 9 repeat units span residues 93–105 (SITS…SGSS), 106–118 (SITS…SSSS), 119–131 (SATE…SGSS), 132–144 (SATE…SGSS), 153–165 (SATE…SGST), 166–178 (SATE…SGSS), 179–191 (SATE…SGSS), 192–204 (SATE…SGSS), and 205–217 (SATE…SGSS). Residues 93-278 (SITSSGSSVS…QSGSSVSGSS (186 aa)) are 13 X approximate repeats, Ser-rich. The 1-10; approximate repeat unit spans residues 218–230 (SATESGSASSVPS). A 1-11; approximate repeat occupies 234–247 (SVTESGSSSSASES). Residues 248–259 (SITQSGTASGSS) form a 1-12; approximate repeat. Residues 266 to 278 (SVTQSGSSVSGSS) form a 1-13 repeat. 3 N-linked (GlcNAc...) asparagine glycosylation sites follow: asparagine 493, asparagine 601, and asparagine 638. 4 tandem repeats follow at residues 745 to 780 (SSKS…ATTT), 781 to 815 (SPKS…TTTV), 816 to 854 (SPKT…ETSA), and 855 to 893 (APKT…ATSA). The interval 745–902 (SSKSYTTVTV…ASPKSYTTVT (158 aa)) is 4.5 X approximate tandem repeats, Thr-rich. Residues 836–857 (KTVTSEAPKETSETSETSAAPK) are disordered. A 2-5; truncated repeat occupies 894–902 (SPKSYTTVT). Alanine 946 is lipidated: GPI-anchor amidated alanine. Residues 947–967 (AGLNANTLNALVGIFVLAFFN) constitute a propeptide, removed in mature form.

It belongs to the SRP1/TIP1 family. The GPI-anchor is attached to the protein in the endoplasmic reticulum and serves to target the protein to the cell surface. There, the glucosamine-inositol phospholipid moiety is cleaved off and the GPI-modified mannoprotein is covalently attached via its lipidless GPI glycan remnant to the 1,6-beta-glucan of the outer cell wall layer.

Its subcellular location is the secreted. It is found in the cell wall. It localises to the membrane. In terms of biological role, involved in cell wall organization and biosynthesis. This is Haze protective factor 1 (HPF1) from Saccharomyces cerevisiae (strain ATCC 204508 / S288c) (Baker's yeast).